The following is a 353-amino-acid chain: D-alanine--D-alanine ligase (353 aa).

Positions 141–349 constitute an ATP-grasp domain; it reads KAAFAAAGLP…LEELVSQLVI (209 aa). 176-231 serves as a coordination point for ATP; the sequence is EAKLKYPCFVKPANLGSSVGISKAQNRNELLIGLDKAASLDRRIVVEQGVSARELE. Residues Asp-302, Glu-316, and Asn-318 each contribute to the Mg(2+) site.

Belongs to the D-alanine--D-alanine ligase family. The cofactor is Mg(2+). Mn(2+) is required as a cofactor.

The protein localises to the cytoplasm. It carries out the reaction 2 D-alanine + ATP = D-alanyl-D-alanine + ADP + phosphate + H(+). Its pathway is cell wall biogenesis; peptidoglycan biosynthesis. In terms of biological role, cell wall formation. The chain is D-alanine--D-alanine ligase from Prochlorococcus marinus (strain MIT 9303).